We begin with the raw amino-acid sequence, 118 residues long: UPF0295 protein BCE_0593 (118 aa).

2 helical membrane passes run 12–32 (IRTF…LGVF) and 43–63 (FMMV…WIGM).

Belongs to the UPF0295 family.

It localises to the cell membrane. This chain is UPF0295 protein BCE_0593, found in Bacillus cereus (strain ATCC 10987 / NRS 248).